Here is a 380-residue protein sequence, read N- to C-terminus: 8-amino-7-oxononanoate synthase (380 aa).

Substrate is bound at residue Arg26. Gly104–Tyr105 is a pyridoxal 5'-phosphate binding site. Substrate is bound at residue His129. Pyridoxal 5'-phosphate-binding positions include Ser175, Asp200–His203, and Thr232–Lys235. At Lys235 the chain carries N6-(pyridoxal phosphate)lysine. Thr345 is a binding site for substrate.

Belongs to the class-II pyridoxal-phosphate-dependent aminotransferase family. BioF subfamily. Homodimer. The cofactor is pyridoxal 5'-phosphate.

It carries out the reaction 6-carboxyhexanoyl-[ACP] + L-alanine + H(+) = (8S)-8-amino-7-oxononanoate + holo-[ACP] + CO2. It participates in cofactor biosynthesis; biotin biosynthesis. In terms of biological role, catalyzes the decarboxylative condensation of pimeloyl-[acyl-carrier protein] and L-alanine to produce 8-amino-7-oxononanoate (AON), [acyl-carrier protein], and carbon dioxide. This is 8-amino-7-oxononanoate synthase from Mycolicibacterium gilvum (strain PYR-GCK) (Mycobacterium gilvum (strain PYR-GCK)).